Here is an 80-residue protein sequence, read N- to C-terminus: MEKLTILLLVAAILMSTQALNQEQRQQAKINLLSKKKPSAERWRRGCTWWFGRCAEDGECCSNSCDQTYCELYAFPSRAI.

Positions 1-19 (MEKLTILLLVAAILMSTQA) are cleaved as a signal peptide. Positions 20 to 45 (LNQEQRQQAKINLLSKKKPSAERWRR) are excised as a propeptide. 3 disulfide bridges follow: Cys-47–Cys-61, Cys-54–Cys-65, and Cys-60–Cys-70. 2 positions are modified to 4-carboxyglutamate: Glu-56 and Glu-59. Glu-71 carries the 4-carboxyglutamate modification. A 4-hydroxyproline modification is found at Pro-76. The propeptide occupies 78-80 (RAI).

It belongs to the conotoxin O2 family. As to expression, expressed by the venom duct.

The protein resides in the secreted. Its function is as follows. Gamma-conotoxins may act on voltage-gated non-specific cation pacemaker channels (HCN). This chain is Gamma-conotoxin-like Am6.6, found in Conus amadis (Amadis cone).